We begin with the raw amino-acid sequence, 245 residues long: Biosynthetic peptidoglycan transglycosylase (245 aa).

Residues 29-49 form a helical membrane-spanning segment; that stretch reads LLVAFLILSLVLVATVSVINP.

It belongs to the glycosyltransferase 51 family.

Its subcellular location is the cell inner membrane. The catalysed reaction is [GlcNAc-(1-&gt;4)-Mur2Ac(oyl-L-Ala-gamma-D-Glu-L-Lys-D-Ala-D-Ala)](n)-di-trans,octa-cis-undecaprenyl diphosphate + beta-D-GlcNAc-(1-&gt;4)-Mur2Ac(oyl-L-Ala-gamma-D-Glu-L-Lys-D-Ala-D-Ala)-di-trans,octa-cis-undecaprenyl diphosphate = [GlcNAc-(1-&gt;4)-Mur2Ac(oyl-L-Ala-gamma-D-Glu-L-Lys-D-Ala-D-Ala)](n+1)-di-trans,octa-cis-undecaprenyl diphosphate + di-trans,octa-cis-undecaprenyl diphosphate + H(+). The protein operates within cell wall biogenesis; peptidoglycan biosynthesis. Peptidoglycan polymerase that catalyzes glycan chain elongation from lipid-linked precursors. The protein is Biosynthetic peptidoglycan transglycosylase of Shewanella amazonensis (strain ATCC BAA-1098 / SB2B).